We begin with the raw amino-acid sequence, 460 residues long: MRIKEILNTAAINSTITAEGWVKTKRELKGFSFIEISDGSTMNGLQVIIDGNLADYEAIIKKLNTGAAVTATGLVVESPGKGQRIELQAKAVTVHGEADPETYPLQKKRHSFEFLRTIGHLRGKTNTMGAVMRVRNACATAIHQFFQERGFIWAHTPIITASDCEGAGEMFAVTNFDLANPKRTKEGAVDYAEDFFGRPAYLTVSGQLEAEVMAMAFKDVYTFGPTFRAENSNTSRHLAEFWMVEPEMAFCDIVGDQDLAEEFLRYIFKYVLEACPEDMEFFNKRIDNSVLATAQNIIENEFARITYTEAIALLEKSNKTFEFPVEWGIDLQSEHERYLAEDLFKKPLIVSNYPKDIKAFYMRLNDDQKTVAAMDVLAPKIGEIIGGSQREERLDVLERRIQEMNIEAADLWWYLDLRRFGTVPHAGFGLGFERLVQFMTGMGNIRDVIPFPRTPLNAEF.

The protein belongs to the class-II aminoacyl-tRNA synthetase family. As to quaternary structure, homodimer.

The protein localises to the cytoplasm. It carries out the reaction tRNA(Asn) + L-asparagine + ATP = L-asparaginyl-tRNA(Asn) + AMP + diphosphate + H(+). The polypeptide is Asparagine--tRNA ligase (Picosynechococcus sp. (strain ATCC 27264 / PCC 7002 / PR-6) (Agmenellum quadruplicatum)).